Here is a 499-residue protein sequence, read N- to C-terminus: Ethanolamine-phosphate phospho-lyase (499 aa).

At Lys-278 the chain carries N6-(pyridoxal phosphate)lysine. Over residues 468 to 479 the composition is skewed to basic and acidic residues; sequence RDSTTDSKENPS. Residues 468–499 are disordered; it reads RDSTTDSKENPSRKRNGMCTDTHSLLSKRLKT.

The protein belongs to the class-III pyridoxal-phosphate-dependent aminotransferase family. In terms of assembly, homotetramer. It depends on pyridoxal 5'-phosphate as a cofactor.

It localises to the mitochondrion. It catalyses the reaction phosphoethanolamine + H2O = acetaldehyde + NH4(+) + phosphate. In terms of biological role, catalyzes the pyridoxal-phosphate-dependent breakdown of phosphoethanolamine, converting it to ammonia, inorganic phosphate and acetaldehyde. In Homo sapiens (Human), this protein is Ethanolamine-phosphate phospho-lyase (ETNPPL).